The sequence spans 126 residues: Protein ApaG (126 aa).

The 125-residue stretch at 2–126 (SDPRYQIDVS…FRLAVPGALH (125 aa)) folds into the ApaG domain.

The polypeptide is Protein ApaG (Ectopseudomonas mendocina (strain ymp) (Pseudomonas mendocina)).